Consider the following 597-residue polypeptide: Sodium/mannose cotransporter SLC5A10 (597 aa).

The Extracellular portion of the chain corresponds to 1–16 (MVADNSTSDPHAPGPQ). Asn-5 is a glycosylation site (N-linked (GlcNAc...) asparagine). Residues 17–37 (LSVTDIVVITVYFALNVAVGI) form a helical membrane-spanning segment. Residues 38–73 (WSSCRASRNTVSGYFLAGRDMTWWPIGASLFGSSEG) are Cytoplasmic-facing. Ser-49 carries the post-translational modification Phosphoserine. A helical transmembrane segment spans residues 74–94 (SGLFIGLAGSGAAGGLAVAGF). Residues 95-100 (DWNATY) are Extracellular-facing. A helical transmembrane segment spans residues 101 to 121 (VLLALAWVFGAIYISSEIVTL). Residues 122-137 (AEYIQKRFGGQRIRMY) lie on the Cytoplasmic side of the membrane. Residues 138 to 158 (LSVLSLLLSVFTKISLDLYAG) traverse the membrane as a helical segment. Topologically, residues 159–171 (ALFVHICLGWNFY) are extracellular. The helical transmembrane segment at 172-194 (LSTILTLTITALYTITGGLVAVI) threads the bilayer. Topologically, residues 195–200 (YTDALQ) are cytoplasmic. A helical membrane pass occupies residues 201–219 (TLIMVVGAVILAIKAFHQI). Residues 220–265 (DGYGQMEAAYARAIPSRTVANTTCHLPRADAMHMFRDPYTGDLPWT) lie on the Extracellular side of the membrane. Residues 266–286 (GMTFGLTIMATWYWCTDQVIV) form a helical membrane-spanning segment. The Cytoplasmic segment spans residues 287–301 (QRSLSARNLNHAKAG). The helical transmembrane segment at 302 to 322 (SILASYLKMLPMGLMIMPGMI) threads the bilayer. Residues 323 to 367 (SRALFPDEVGCVVPSECLRACGAEIGCSNIAYPKLVMELMPVGLR) are Extracellular-facing. Residues 368–390 (GLMIAVMMPALMSSLSSIFNSSS) form a helical membrane-spanning segment. At 391-410 (TLFTMDIWRRLRPCASEREL) the chain is on the cytoplasmic side. Residues 411-431 (LLVGRLVIVVLIGVSVAWIPV) traverse the membrane as a helical segment. Residues 432–444 (LQGSNGGQLFIYM) lie on the Extracellular side of the membrane. A helical membrane pass occupies residues 445-465 (QSVTSSLAPPVTAVFTLGIFW). Residues 466–472 (QRANEQG) lie on the Cytoplasmic side of the membrane. The helical transmembrane segment at 473–493 (AFWGLLAGLAVGATRLVLEFL) threads the bilayer. At 494 to 514 (HPAPPCGAADTRPAVLSQLHY) the chain is on the extracellular side. Residues 515-535 (LHFAVALFVLTGAVAVGGSLL) traverse the membrane as a helical segment. The Cytoplasmic portion of the chain corresponds to 536-576 (TPPPRRHQIENLTWWTLTRDLSLGAKAGDGQTPQRYTFWAR). A helical membrane pass occupies residues 577–597 (VCGFNAILLMCVNIFFYAYFA).

Belongs to the sodium:solute symporter (SSF) (TC 2.A.21) family. In terms of tissue distribution, expressed only in kidney.

The protein localises to the apical cell membrane. The catalysed reaction is D-mannose(out) + Na(+)(out) = D-mannose(in) + Na(+)(in). The enzyme catalyses D-fructopyranose(out) + Na(+)(out) = D-fructopyranose(in) + Na(+)(in). Functionally, electrogenic Na+-coupled sugar symporter that actively transports D-mannose or D-fructose at the plasma membrane, with a Na+ to sugar coupling ratio of 1:1. Transporter activity is driven by a transmembrane Na+ electrochemical gradient set by the Na+/K+ pump. Exclusively recognizes sugar substrates having a pyranose ring with an axial hydroxyl group on carbon 2. Has likely evolved to enable renal reabsorption of D-mannose, an important constituent of oligosaccharide chains of glycoproteins. Contributes to dietary D-fructose reabsorption from glomerular filtrate across the brush border of the kidney. This Oryctolagus cuniculus (Rabbit) protein is Sodium/mannose cotransporter SLC5A10 (SLC5A10).